The chain runs to 382 residues: 1-deoxy-D-xylulose 5-phosphate reductoisomerase (382 aa).

NADPH-binding residues include Thr10, Gly11, Ser12, Ile13, Asn38, and Asn120. Lys121 lines the 1-deoxy-D-xylulose 5-phosphate pocket. An NADPH-binding site is contributed by Glu122. A Mn(2+)-binding site is contributed by Asp146. Ser147, Glu148, Ser172, and His195 together coordinate 1-deoxy-D-xylulose 5-phosphate. Glu148 is a Mn(2+) binding site. Position 201 (Gly201) interacts with NADPH. Positions 208, 213, 214, and 217 each coordinate 1-deoxy-D-xylulose 5-phosphate. Glu217 is a Mn(2+) binding site.

This sequence belongs to the DXR family. Mg(2+) serves as cofactor. The cofactor is Mn(2+).

It carries out the reaction 2-C-methyl-D-erythritol 4-phosphate + NADP(+) = 1-deoxy-D-xylulose 5-phosphate + NADPH + H(+). It functions in the pathway isoprenoid biosynthesis; isopentenyl diphosphate biosynthesis via DXP pathway; isopentenyl diphosphate from 1-deoxy-D-xylulose 5-phosphate: step 1/6. In terms of biological role, catalyzes the NADPH-dependent rearrangement and reduction of 1-deoxy-D-xylulose-5-phosphate (DXP) to 2-C-methyl-D-erythritol 4-phosphate (MEP). In Thermoanaerobacter pseudethanolicus (strain ATCC 33223 / 39E) (Clostridium thermohydrosulfuricum), this protein is 1-deoxy-D-xylulose 5-phosphate reductoisomerase.